The following is a 72-amino-acid chain: MIMRMTLTLFVLVVMTAASASGDALTEAKRIPYCGQTGAECYSWCIKQDLSKDWCCDFVKDIRMNPPADKCP.

Residues 1–22 form the signal peptide; it reads MIMRMTLTLFVLVVMTAASASG. The propeptide occupies 23–28; sequence DALTEA. Intrachain disulfides connect cysteine 34-cysteine 41, cysteine 45-cysteine 55, and cysteine 56-cysteine 71.

The protein belongs to the conotoxin K superfamily. In terms of tissue distribution, expressed by the venom duct.

Its subcellular location is the secreted. Its function is as follows. Neurotoxin that induces excitatory symptoms in mice following intracranial administration. No symptoms are observed after intraperitoneal and intravenous (tail vein) injections. In Conus imperialis (Imperial cone), this protein is Conotoxin im23a.